A 322-amino-acid chain; its full sequence is Sideroflexin-1 (322 aa).

The residue at position 2 (Ser2) is an N-acetylserine. Residues 2-102 are Mitochondrial matrix-facing; sequence SGELPPNINI…MSAQVPMNMT (101 aa). The chain crosses the membrane as a helical span at residues 103–120; that stretch reads ITGCMMTFYRTTPAVLFW. At 121–146 the chain is on the mitochondrial intermembrane side; that stretch reads QWINQSFNAVVNYTNRSGDAPLTVNE. The helical transmembrane segment at 147–167 threads the bilayer; that stretch reads LGTAYVSATTGAVATALGLNA. The Mitochondrial matrix portion of the chain corresponds to 168–174; the sequence is LTKHVSP. The chain crosses the membrane as a helical span at residues 175 to 195; the sequence is LIGRFVPFAAVAAANCINIPL. The Mitochondrial intermembrane segment spans residues 196-228; sequence MRQRELRAGIPVTDENGNRLGESANAAKQAITQ. The helical transmembrane segment at 229–249 threads the bilayer; it reads VVISRILMAAPGMAIPPFIMN. Residues 250–266 lie on the Mitochondrial matrix side of the membrane; that stretch reads TLEKKAFLKRFPWMSAP. The helical transmembrane segment at 267-287 threads the bilayer; it reads IQVGLVGFCLVFATPLCCALF. Residues 288 to 322 are Mitochondrial intermembrane-facing; sequence PQKSSMSVTSLEAELQAKIRETSPELRRVYFNKGL.

It belongs to the sideroflexin family.

It localises to the mitochondrion inner membrane. The enzyme catalyses L-serine(in) = L-serine(out). It carries out the reaction L-alanine(in) = L-alanine(out). The catalysed reaction is L-cysteine(in) = L-cysteine(out). Its function is as follows. Amino acid transporter importing serine, an essential substrate of the mitochondrial branch of the one-carbon pathway, into mitochondria. Mitochondrial serine is then converted to glycine and formate, which exits to the cytosol where it is used to generate the charged folates that serve as one-carbon donors. May also transport other amino acids including alanine and cysteine. The chain is Sideroflexin-1 (SFXN1) from Sus scrofa (Pig).